The following is a 646-amino-acid chain: Threonine--tRNA ligase (646 aa).

Positions 1–63 constitute a TGS domain; sequence MADLSIIFPD…SSGGSIEIIT (63 aa). Residues 244–541 are catalytic; the sequence is DHRKLGKELG…LIEEYKGAFP (298 aa). The Zn(2+) site is built by cysteine 337, histidine 388, and histidine 518.

Belongs to the class-II aminoacyl-tRNA synthetase family. Homodimer. Zn(2+) serves as cofactor.

The protein localises to the cytoplasm. The catalysed reaction is tRNA(Thr) + L-threonine + ATP = L-threonyl-tRNA(Thr) + AMP + diphosphate + H(+). Catalyzes the attachment of threonine to tRNA(Thr) in a two-step reaction: L-threonine is first activated by ATP to form Thr-AMP and then transferred to the acceptor end of tRNA(Thr). Also edits incorrectly charged L-seryl-tRNA(Thr). The chain is Threonine--tRNA ligase from Oceanobacillus iheyensis (strain DSM 14371 / CIP 107618 / JCM 11309 / KCTC 3954 / HTE831).